We begin with the raw amino-acid sequence, 274 residues long: Diaminopimelate epimerase (274 aa).

Substrate is bound by residues Asn-11, Gln-44, and Asn-64. Cys-73 functions as the Proton donor in the catalytic mechanism. Residues 74 to 75 (GN), Asn-157, Asn-190, and 208 to 209 (ER) each bind substrate. Catalysis depends on Cys-217, which acts as the Proton acceptor. 218–219 (GS) is a substrate binding site.

This sequence belongs to the diaminopimelate epimerase family. In terms of assembly, homodimer.

The protein localises to the cytoplasm. The catalysed reaction is (2S,6S)-2,6-diaminopimelate = meso-2,6-diaminopimelate. The protein operates within amino-acid biosynthesis; L-lysine biosynthesis via DAP pathway; DL-2,6-diaminopimelate from LL-2,6-diaminopimelate: step 1/1. Its function is as follows. Catalyzes the stereoinversion of LL-2,6-diaminopimelate (L,L-DAP) to meso-diaminopimelate (meso-DAP), a precursor of L-lysine and an essential component of the bacterial peptidoglycan. This Enterobacter sp. (strain 638) protein is Diaminopimelate epimerase.